Consider the following 387-residue polypeptide: Pepsin A-5 (387 aa).

The signal sequence occupies residues 1 to 15 (MKWLWVLGLVALSEC). The propeptide at 16-62 (LVKIPLMKIKSMRENLRESQVLKDYLEKYPRSRAHVLLEQRRNPAVT) is activation peptide. Residues 74–384 (YIGIISIGTP…DRANNRIGLA (311 aa)) form the Peptidase A1 domain. Asp92 is an active-site residue. Cystine bridges form between Cys105–Cys110 and Cys266–Cys270. Asp275 is a catalytic residue. Cys309 and Cys343 are disulfide-bonded.

This sequence belongs to the peptidase A1 family. Expressed in glandular chief cells of the neonatal stomach. Expressed in yolk sacs of the placenta (at protein level).

Its subcellular location is the secreted. The enzyme catalyses Preferential cleavage: hydrophobic, preferably aromatic, residues in P1 and P1' positions. Cleaves 1-Phe-|-Val-2, 4-Gln-|-His-5, 13-Glu-|-Ala-14, 14-Ala-|-Leu-15, 15-Leu-|-Tyr-16, 16-Tyr-|-Leu-17, 23-Gly-|-Phe-24, 24-Phe-|-Phe-25 and 25-Phe-|-Tyr-26 bonds in the B chain of insulin.. With respect to regulation, inhibited by pepstatin A. Functionally, shows particularly broad specificity; although bonds involving phenylalanine and leucine are preferred, many others are also cleaved to some extent. May play a role as a specialized neonatal digestive enzyme. The protein is Pepsin A-5 of Mus musculus (Mouse).